The sequence spans 394 residues: Elongation factor Tu (394 aa).

Residues 10–204 enclose the tr-type G domain; that stretch reads KPHVNVGTIG…HLDSYIPEPE (195 aa). Positions 19–26 are G1; sequence GHVDHGKT. Residue 19-26 participates in GTP binding; it reads GHVDHGKT. Mg(2+) is bound at residue T26. Residues 60–64 are G2; it reads GITIN. Residues 81–84 form a G3 region; it reads DCPG. Residues 81-85 and 136-139 contribute to the GTP site; these read DCPGH and NKCD. The tract at residues 136–139 is G4; that stretch reads NKCD. Residues 174-176 are G5; the sequence is SAL.

This sequence belongs to the TRAFAC class translation factor GTPase superfamily. Classic translation factor GTPase family. EF-Tu/EF-1A subfamily. Monomer.

The protein localises to the cytoplasm. The enzyme catalyses GTP + H2O = GDP + phosphate + H(+). Functionally, GTP hydrolase that promotes the GTP-dependent binding of aminoacyl-tRNA to the A-site of ribosomes during protein biosynthesis. This chain is Elongation factor Tu, found in Haemophilus ducreyi (strain 35000HP / ATCC 700724).